Reading from the N-terminus, the 342-residue chain is N-acetyl-gamma-glutamyl-phosphate reductase (342 aa).

Residue C149 is part of the active site.

It belongs to the NAGSA dehydrogenase family. Type 1 subfamily.

The protein resides in the cytoplasm. It carries out the reaction N-acetyl-L-glutamate 5-semialdehyde + phosphate + NADP(+) = N-acetyl-L-glutamyl 5-phosphate + NADPH + H(+). It participates in amino-acid biosynthesis; L-arginine biosynthesis; N(2)-acetyl-L-ornithine from L-glutamate: step 3/4. Its function is as follows. Catalyzes the NADPH-dependent reduction of N-acetyl-5-glutamyl phosphate to yield N-acetyl-L-glutamate 5-semialdehyde. In Jannaschia sp. (strain CCS1), this protein is N-acetyl-gamma-glutamyl-phosphate reductase.